We begin with the raw amino-acid sequence, 303 residues long: Probable 5-dehydro-4-deoxyglucarate dehydratase (303 aa).

It belongs to the DapA family.

The catalysed reaction is 5-dehydro-4-deoxy-D-glucarate + H(+) = 2,5-dioxopentanoate + CO2 + H2O. The protein operates within carbohydrate acid metabolism; D-glucarate degradation; 2,5-dioxopentanoate from D-glucarate: step 2/2. In Acinetobacter baylyi (strain ATCC 33305 / BD413 / ADP1), this protein is Probable 5-dehydro-4-deoxyglucarate dehydratase.